We begin with the raw amino-acid sequence, 251 residues long: Elongator complex protein 6 (251 aa).

It belongs to the ELP6 family. As to quaternary structure, component of the elongator complex composed of Elp1, Elp2, Elp3, Elp4, Elp5 and Elp6. The elongator complex associates with and stabilizes microtubules; efficient interaction requires the full complex. Interacts with InR/Insulin-like receptor; the interaction may stabilize Elp6.

The protein resides in the cytoplasm. The protein localises to the nucleus. Its subcellular location is the cytoskeleton. It localises to the spindle. It functions in the pathway tRNA modification; 5-methoxycarbonylmethyl-2-thiouridine-tRNA biosynthesis. Its function is as follows. Component of the elongator complex, which is required for multiple tRNA modifications, including mcm5U (5-methoxycarbonylmethyl uridine), mcm5s2U (5-methoxycarbonylmethyl-2-thiouridine), and ncm5U (5-carbamoylmethyl uridine). The elongator complex catalyzes formation of carboxymethyluridine in the wobble base at position 34 in tRNAs. Binding by the elongator complex stabilizes microtubules and promotes their growth. This induces central spindle asymmetry, promoting polarized signaling endosome trafficking during asymmetric cell division and cell fate assignation of sensory organ precursor cells. Required in germ line cells for microtubule organization involved in oocyte polarization and chromosome organization. Involved in InR-TOR (insulin-like receptor-target of rapamycin) signaling regulation of cellular metabolism, autophagy and apoptosis. This is Elongator complex protein 6 from Drosophila melanogaster (Fruit fly).